A 199-amino-acid polypeptide reads, in one-letter code: NAD(P)H dehydrogenase (quinone) (199 aa).

Residues 4–190 (VLVLYYSSYG…TGARYQGRKI (187 aa)) form the Flavodoxin-like domain. FMN contacts are provided by residues 10–15 (SSYGHL) and 78–80 (TRF). Position 12 (tyrosine 12) interacts with NAD(+). Tryptophan 98 provides a ligand contact to substrate. FMN is bound by residues 113 to 119 (STATQHG) and histidine 134.

The protein belongs to the WrbA family. Requires FMN as cofactor.

It catalyses the reaction a quinone + NADH + H(+) = a quinol + NAD(+). The enzyme catalyses a quinone + NADPH + H(+) = a quinol + NADP(+). The polypeptide is NAD(P)H dehydrogenase (quinone) (Caulobacter vibrioides (strain ATCC 19089 / CIP 103742 / CB 15) (Caulobacter crescentus)).